Here is a 152-residue protein sequence, read N- to C-terminus: 6,7-dimethyl-8-ribityllumazine synthase (152 aa).

Residues phenylalanine 18, 49–51, and 75–77 contribute to the 5-amino-6-(D-ribitylamino)uracil site; these read ALE and CVI. 80–81 lines the (2S)-2-hydroxy-3-oxobutyl phosphate pocket; that stretch reads ET. Residue histidine 83 is the Proton donor of the active site. Asparagine 108 serves as a coordination point for 5-amino-6-(D-ribitylamino)uracil. Arginine 122 serves as a coordination point for (2S)-2-hydroxy-3-oxobutyl phosphate.

It belongs to the DMRL synthase family.

It catalyses the reaction (2S)-2-hydroxy-3-oxobutyl phosphate + 5-amino-6-(D-ribitylamino)uracil = 6,7-dimethyl-8-(1-D-ribityl)lumazine + phosphate + 2 H2O + H(+). It participates in cofactor biosynthesis; riboflavin biosynthesis; riboflavin from 2-hydroxy-3-oxobutyl phosphate and 5-amino-6-(D-ribitylamino)uracil: step 1/2. Catalyzes the formation of 6,7-dimethyl-8-ribityllumazine by condensation of 5-amino-6-(D-ribitylamino)uracil with 3,4-dihydroxy-2-butanone 4-phosphate. This is the penultimate step in the biosynthesis of riboflavin. The protein is 6,7-dimethyl-8-ribityllumazine synthase of Bartonella bacilliformis (strain ATCC 35685 / KC583 / Herrer 020/F12,63).